We begin with the raw amino-acid sequence, 351 residues long: Methylthioribose-1-phosphate isomerase (351 aa).

Residues 51-53, Arg-94, and Gln-199 each bind substrate; that span reads RGA. Asp-240 (proton donor) is an active-site residue. 250-251 contributes to the substrate binding site; it reads NK.

The protein belongs to the EIF-2B alpha/beta/delta subunits family. MtnA subfamily. As to quaternary structure, homodimer.

It carries out the reaction 5-(methylsulfanyl)-alpha-D-ribose 1-phosphate = 5-(methylsulfanyl)-D-ribulose 1-phosphate. It participates in amino-acid biosynthesis; L-methionine biosynthesis via salvage pathway; L-methionine from S-methyl-5-thio-alpha-D-ribose 1-phosphate: step 1/6. Functionally, catalyzes the interconversion of methylthioribose-1-phosphate (MTR-1-P) into methylthioribulose-1-phosphate (MTRu-1-P). This chain is Methylthioribose-1-phosphate isomerase, found in Bacillus cereus (strain ZK / E33L).